Consider the following 122-residue polypeptide: Large ribosomal subunit protein uL14 (122 aa).

The protein belongs to the universal ribosomal protein uL14 family. As to quaternary structure, part of the 50S ribosomal subunit. Forms a cluster with proteins L3 and L19. In the 70S ribosome, L14 and L19 interact and together make contacts with the 16S rRNA in bridges B5 and B8.

Its function is as follows. Binds to 23S rRNA. Forms part of two intersubunit bridges in the 70S ribosome. This chain is Large ribosomal subunit protein uL14, found in Streptococcus gordonii (strain Challis / ATCC 35105 / BCRC 15272 / CH1 / DL1 / V288).